The following is a 572-amino-acid chain: Mitochondrial chaperone TCM62 (572 aa).

The transit peptide at 1 to 16 (MLRNCLRKLGNHQTKC) directs the protein to the mitochondrion. Over 17–471 (SVKTLHTPIY…KANEPNFMTK (455 aa)) the chain is Mitochondrial matrix. The helical transmembrane segment at 472-488 (VGINAVLSAVILPSEVA) threads the bilayer. The Mitochondrial intermembrane portion of the chain corresponds to 489 to 572 (FKNAYGYNYY…VYKKPERHKA (84 aa)).

The protein belongs to the chaperonin (HSP60) family. Forms a high molecular mass protein complex of approximately 850 kDa.

Its subcellular location is the mitochondrion inner membrane. Functionally, chaperone. Required for the assembly of succinate dehydrogenase subunits. Ensures mitochondrial gene expression at elevated temperatures and prevents heat-aggregation of the ribosomal subunit VAR1. The sequence is that of Mitochondrial chaperone TCM62 (TCM62) from Saccharomyces cerevisiae (strain YJM789) (Baker's yeast).